The sequence spans 90 residues: Cell division protein CrgA (90 aa).

Residues 1 to 25 are disordered; it reads MPKARVTKNETAPVSSNPSANRTPV. Positions 9 to 22 are enriched in polar residues; sequence NETAPVSSNPSANR. Helical transmembrane passes span 38-58 and 67-87; these read VIMF…YLVG and LGAW…LMTM.

Belongs to the CrgA family.

The protein localises to the cell membrane. In terms of biological role, involved in cell division. The polypeptide is Cell division protein CrgA (Corynebacterium glutamicum (strain ATCC 13032 / DSM 20300 / JCM 1318 / BCRC 11384 / CCUG 27702 / LMG 3730 / NBRC 12168 / NCIMB 10025 / NRRL B-2784 / 534)).